Here is a 214-residue protein sequence, read N- to C-terminus: Riboflavin kinase (214 aa).

Residues methionine 1–serine 26 form a disordered region. Residues threonine 44 and asparagine 46 each contribute to the Mg(2+) site. The Nucleophile role is filled by glutamate 112.

It belongs to the flavokinase family. The cofactor is Zn(2+). Requires Mg(2+) as cofactor.

It catalyses the reaction riboflavin + ATP = FMN + ADP + H(+). The protein operates within cofactor biosynthesis; FMN biosynthesis; FMN from riboflavin (ATP route): step 1/1. In terms of biological role, catalyzes the phosphorylation of riboflavin (vitamin B2) to form flavin mononucleotide (FMN) coenzyme. This is Riboflavin kinase (fmn1) from Aspergillus clavatus (strain ATCC 1007 / CBS 513.65 / DSM 816 / NCTC 3887 / NRRL 1 / QM 1276 / 107).